We begin with the raw amino-acid sequence, 83 residues long: Large ribosomal subunit protein bL31 (83 aa).

Belongs to the bacterial ribosomal protein bL31 family. Type A subfamily. In terms of assembly, part of the 50S ribosomal subunit.

Functionally, binds the 23S rRNA. The sequence is that of Large ribosomal subunit protein bL31 from Gloeothece citriformis (strain PCC 7424) (Cyanothece sp. (strain PCC 7424)).